The chain runs to 379 residues: MSTEGKVITCKAAVAWEAKKPLVIEDIEVQPPQKGEVRIKILYTGVCHTDSYTLSGSDPEGIFPCILGHEGGGIVESIGEGVTSVKVGDHVIPLYIPECGTCKFCTSNKTNLCSKIRITQGKGQMPDGTTRFKCKGKEIFHFMGTSTFSQYTVLPEISCCVVREDAPLDKVCLLGCGITTGFGAAKITAKVEEGSTVAIFGLGAVGLSVAQGAVDCGAKRIIGIDNNETKFGPGKDFGCTEFINPSKDLPEGKTIQQHLVDITDGGVDYSFECIGNVNVMRAALECCHKGWGVSTIVGVAPAGAEISTRPFQLVTGRVWKGSAFGGVKSRSQLPSIIDKYMDKKLKVDEYVTFTYPLNEINTAFDVMHEGKSLRSVVNL.

The Zn(2+) site is built by Cys-47, His-69, Cys-99, Cys-102, Cys-105, Cys-113, and Cys-176.

It belongs to the zinc-containing alcohol dehydrogenase family. Class-III subfamily. In terms of assembly, homodimer. Zn(2+) serves as cofactor.

The protein resides in the cytoplasm. The enzyme catalyses a primary alcohol + NAD(+) = an aldehyde + NADH + H(+). It catalyses the reaction a secondary alcohol + NAD(+) = a ketone + NADH + H(+). The catalysed reaction is S-(hydroxymethyl)glutathione + NADP(+) = S-formylglutathione + NADPH + H(+). It carries out the reaction S-(hydroxymethyl)glutathione + NAD(+) = S-formylglutathione + NADH + H(+). In terms of biological role, class-III ADH is remarkably ineffective in oxidizing ethanol, but it readily catalyzes the oxidation of long-chain primary alcohols and the oxidation of S-(hydroxymethyl) glutathione. The polypeptide is Alcohol dehydrogenase class-3 (adh5) (Dictyostelium discoideum (Social amoeba)).